Consider the following 213-residue polypeptide: UPF0056 membrane protein AF_2111 (213 aa).

6 helical membrane-spanning segments follow: residues 1–21 (MDIAGYLSFFFASFTTLFIII), 51–71 (IIAFLILFITMVTGGKILDYF), 75–95 (ISSLKIAGGILLFISSVDILL), 118–138 (VFPLALPLYTGPGAITAGIVL), 142–162 (AGDVVMKLLVVLSAALVYSIV), and 181–201 (ADIAARILAIFLAAIAVEFVF).

The protein belongs to the UPF0056 (MarC) family.

It localises to the cell membrane. The sequence is that of UPF0056 membrane protein AF_2111 from Archaeoglobus fulgidus (strain ATCC 49558 / DSM 4304 / JCM 9628 / NBRC 100126 / VC-16).